A 366-amino-acid polypeptide reads, in one-letter code: Di-N-acetylchitobiase (366 aa).

The first 22 residues, 1–22, serve as a signal peptide directing secretion; sequence MALCGLPEFTLLLLPLLARLSA. The GH18 domain maps to 23–366; sequence GDCPCSEAAL…EMWGALKPRL (344 aa). Glu127 acts as the Proton donor in catalysis. Asn131, Asn177, Asn212, Asn246, and Asn283 each carry an N-linked (GlcNAc...) asparagine glycan.

The protein belongs to the glycosyl hydrolase 18 family.

It localises to the lysosome. Involved in the degradation of asparagine-linked glycoproteins. Hydrolyze of N-acetyl-beta-D-glucosamine (1-4)N-acetylglucosamine chitobiose core from the reducing end of the bond, it requires prior cleavage by glycosylasparaginase. In Mus musculus (Mouse), this protein is Di-N-acetylchitobiase (Ctbs).